A 619-amino-acid polypeptide reads, in one-letter code: Schlafen family member 12-like (619 aa).

Residues isoleucine 598–leucine 618 traverse the membrane as a helical segment.

It belongs to the Schlafen family.

It is found in the membrane. The sequence is that of Schlafen family member 12-like (SLFN12L) from Pongo abelii (Sumatran orangutan).